The following is a 799-amino-acid chain: Signal transducer and activator of transcription 5A (799 aa).

Residue Tyr90 is modified to Phosphotyrosine. The residue at position 128 (Ser128) is a Phosphoserine. The region spanning 589-686 (WNDGAILGFV…EVFSKYYTPV (98 aa)) is the SH2 domain. Residue Tyr682 is modified to Phosphotyrosine. Position 699 is a phosphotyrosine; by JAK2 (Tyr699). A disordered region spans residues 778–799 (DSLDPRLSPPAGLFASTRGSLS). Ser785 carries the post-translational modification Phosphoserine.

Belongs to the transcription factor STAT family. As to quaternary structure, forms a homodimer or a heterodimer with a related family member. Binds NR3C1. Interacts with NCOA1 and SOCS7. Interacts with ERBB4. Interacts with EBF4. Interacts with CD69. Post-translationally, ISGylated. In terms of processing, tyrosine phosphorylated in response to KITLG/SCF, IL2, IL3, IL7, IL15, CSF2/GMCSF, GH1, PRL, EPO and THPO. Activated KIT promotes phosphorylation on tyrosine residues and subsequent translocation to the nucleus. Tyrosine phosphorylated in response to constitutively activated FGFR1, FGFR2, FGFR3 and FGFR4. Tyrosine phosphorylation is required for DNA-binding activity and dimerization. Serine phosphorylation is also required for maximal transcriptional activity. Tyrosine phosphorylated in response to signaling via activated FLT3; wild-type FLT3 results in much weaker phosphorylation than constitutively activated mutant FLT3. Alternatively, can be phosphorylated by JAK2 at Tyr-699.

It localises to the cytoplasm. The protein resides in the nucleus. Its function is as follows. Carries out a dual function: signal transduction and activation of transcription. Mediates cellular responses to the cytokine KITLG/SCF and other growth factors. May mediate cellular responses to activated FGFR1, FGFR2, FGFR3 and FGFR4. Binds to the GAS element and activates PRL-induced transcription. Regulates the expression of milk proteins during lactation. This is Signal transducer and activator of transcription 5A (STAT5A) from Sus scrofa (Pig).